The sequence spans 238 residues: Thrombin-like enzyme gyroxin B2.1 (238 aa).

The region spanning 1–229 (VIGGDECNIN…HLDWIQNIIA (229 aa)) is the Peptidase S1 domain. Intrachain disulfides connect Cys-7-Cys-141, Cys-28-Cys-44, Cys-78-Cys-236, Cys-120-Cys-190, Cys-152-Cys-169, and Cys-180-Cys-205. The active-site Charge relay system is the His-43. An N-linked (GlcNAc...) asparagine glycan is attached at Asn-81. Asp-88 functions as the Charge relay system in the catalytic mechanism. The Charge relay system role is filled by Ser-184.

This sequence belongs to the peptidase S1 family. Snake venom subfamily. In terms of assembly, monomer. In terms of tissue distribution, expressed by the venom gland.

It is found in the secreted. Thrombin-like snake venom serine protease. Displays a specificity similar to trypsin. Releases only fibrinopeptide A in the conversion of fibrinogen (FGA) to fibrin. Shows coagulant, esterase and amidase activities. Reversibly increases the permeability of the blood brain barrier (BBB) in mice. Induces the barrel rotation syndrome in mice, which is manifested by gyroxin-like, rapid rolling motions. This syndrome may be due to its effect on BBB permeability, and certainly also to other actions affecting endogenous substrates present in the endothelium, nervous tissues or blood. The polypeptide is Thrombin-like enzyme gyroxin B2.1 (Crotalus durissus terrificus (South American rattlesnake)).